The following is a 156-amino-acid chain: Cellulose synthase operon protein D (156 aa).

It participates in glycan metabolism; bacterial cellulose biosynthesis. May have a major role in the perfection of crystallization, involved either in the pore structure itself or in the organization of the pores within the linear array of terminal synthesizing complexes (TCs). The sequence is that of Cellulose synthase operon protein D (bcsDI) from Komagataeibacter xylinus (Gluconacetobacter xylinus).